Here is a 102-residue protein sequence, read N- to C-terminus: Caroteno-chlorophyll a-c-binding protein (102 aa).

Residues glutamate 36 and histidine 39 each coordinate chlorophyll a. A helical transmembrane segment spans residues 78–98; it reads VLGLIKIVPAGLWGIMIFYAA.

It belongs to the light-harvesting chlorophyll a/b-binding (LHC) protein family. The LHC complex consists of chlorophyll a-b binding proteins. It depends on Binds at least 14 chlorophylls (8 Chl-a and 6 Chl-b) and carotenoids such as lutein and neoxanthin. as a cofactor. Post-translationally, photoregulated by reversible phosphorylation of its threonine residues.

The protein resides in the plastid. It is found in the chloroplast thylakoid membrane. In terms of biological role, the light-harvesting complex (LHC) functions as a light receptor, it captures and delivers excitation energy to photosystems with which it is closely associated. This Amphidinium carterae (Dinoflagellate) protein is Caroteno-chlorophyll a-c-binding protein.